Here is a 285-residue protein sequence, read N- to C-terminus: Bifunctional protein FolD (285 aa).

Residues 166-168 (GAS), S191, and I232 contribute to the NADP(+) site.

This sequence belongs to the tetrahydrofolate dehydrogenase/cyclohydrolase family. In terms of assembly, homodimer.

It catalyses the reaction (6R)-5,10-methylene-5,6,7,8-tetrahydrofolate + NADP(+) = (6R)-5,10-methenyltetrahydrofolate + NADPH. The catalysed reaction is (6R)-5,10-methenyltetrahydrofolate + H2O = (6R)-10-formyltetrahydrofolate + H(+). It functions in the pathway one-carbon metabolism; tetrahydrofolate interconversion. In terms of biological role, catalyzes the oxidation of 5,10-methylenetetrahydrofolate to 5,10-methenyltetrahydrofolate and then the hydrolysis of 5,10-methenyltetrahydrofolate to 10-formyltetrahydrofolate. In Actinobacillus pleuropneumoniae serotype 7 (strain AP76), this protein is Bifunctional protein FolD.